Here is a 539-residue protein sequence, read N- to C-terminus: Chaperonin GroEL (539 aa).

Residues 30 to 33, lysine 51, 87 to 91, glycine 415, 479 to 481, and aspartate 495 contribute to the ATP site; these read TLGP, DGTTT, and NAA.

The protein belongs to the chaperonin (HSP60) family. In terms of assembly, forms a cylinder of 14 subunits composed of two heptameric rings stacked back-to-back. Interacts with the co-chaperonin GroES.

The protein resides in the cytoplasm. The catalysed reaction is ATP + H2O + a folded polypeptide = ADP + phosphate + an unfolded polypeptide.. In terms of biological role, together with its co-chaperonin GroES, plays an essential role in assisting protein folding. The GroEL-GroES system forms a nano-cage that allows encapsulation of the non-native substrate proteins and provides a physical environment optimized to promote and accelerate protein folding. This chain is Chaperonin GroEL, found in Enterobacter agglomerans (Erwinia herbicola).